The primary structure comprises 490 residues: ATP synthase subunit beta (490 aa).

173 to 180 (GGAGVGKT) contacts ATP.

The protein belongs to the ATPase alpha/beta chains family. F-type ATPases have 2 components, CF(1) - the catalytic core - and CF(0) - the membrane proton channel. CF(1) has five subunits: alpha(3), beta(3), gamma(1), delta(1), epsilon(1). CF(0) has three main subunits: a(1), b(2) and c(9-12). The alpha and beta chains form an alternating ring which encloses part of the gamma chain. CF(1) is attached to CF(0) by a central stalk formed by the gamma and epsilon chains, while a peripheral stalk is formed by the delta and b chains.

It localises to the cell membrane. The enzyme catalyses ATP + H2O + 4 H(+)(in) = ADP + phosphate + 5 H(+)(out). Produces ATP from ADP in the presence of a proton gradient across the membrane. The catalytic sites are hosted primarily by the beta subunits. This Bifidobacterium longum subsp. infantis (strain ATCC 15697 / DSM 20088 / JCM 1222 / NCTC 11817 / S12) protein is ATP synthase subunit beta.